Reading from the N-terminus, the 306-residue chain is Tyrosine recombinase EUBREC_2677 (306 aa).

One can recognise a Core-binding (CB) domain in the interval 2–84 (NNLQTHISSY…SIKAFFHYLE (83 aa)). The region spanning 106–296 (ILPKTIPLYI…AVSKQKDILI (191 aa)) is the Tyr recombinase domain. Residues Arg-155, Lys-179, His-248, Arg-251, and His-274 contribute to the active site. Tyr-283 serves as the catalytic O-(3'-phospho-DNA)-tyrosine intermediate.

It belongs to the 'phage' integrase family.

It localises to the cytoplasm. Functionally, site-specific tyrosine recombinase, which acts by catalyzing the cutting and rejoining of the recombining DNA molecules. This is Tyrosine recombinase EUBREC_2677 from Agathobacter rectalis (strain ATCC 33656 / DSM 3377 / JCM 17463 / KCTC 5835 / VPI 0990) (Eubacterium rectale).